The sequence spans 570 residues: Sulfite reductase [NADPH] hemoprotein beta-component (570 aa).

Cys-434, Cys-440, Cys-479, and Cys-483 together coordinate [4Fe-4S] cluster. Cys-483 provides a ligand contact to siroheme.

It belongs to the nitrite and sulfite reductase 4Fe-4S domain family. As to quaternary structure, alpha(8)-beta(8). The alpha component is a flavoprotein, the beta component is a hemoprotein. The cofactor is siroheme. Requires [4Fe-4S] cluster as cofactor.

The catalysed reaction is hydrogen sulfide + 3 NADP(+) + 3 H2O = sulfite + 3 NADPH + 4 H(+). It functions in the pathway sulfur metabolism; hydrogen sulfide biosynthesis; hydrogen sulfide from sulfite (NADPH route): step 1/1. Component of the sulfite reductase complex that catalyzes the 6-electron reduction of sulfite to sulfide. This is one of several activities required for the biosynthesis of L-cysteine from sulfate. This is Sulfite reductase [NADPH] hemoprotein beta-component from Salmonella dublin (strain CT_02021853).